We begin with the raw amino-acid sequence, 102 residues long: Chorion protein S15 (102 aa).

The N-terminal stretch at methionine 1–alanine 18 is a signal peptide.

It belongs to the chorion protein S15/S18 family.

The protein localises to the secreted. Functionally, chorion membrane (egg shell) protein; plays a role in protecting the egg from the environment. The polypeptide is Chorion protein S15 (Cp15) (Drosophila grimshawi (Hawaiian fruit fly)).